Reading from the N-terminus, the 160-residue chain is Transcriptional repressor NrdR (160 aa).

Over residues 1–11 the composition is skewed to polar residues; that stretch reads MRCPNCNSLDT. The disordered stretch occupies residues 1–20; the sequence is MRCPNCNSLDTQVKDSRPTE. The segment at 3–34 is a zinc-finger region; sequence CPNCNSLDTQVKDSRPTEDSSVIRRRRVCIAC. The ATP-cone domain maps to 49-139; sequence LTVIKRNGRR…VYRNFREAKD (91 aa).

The protein belongs to the NrdR family. Requires Zn(2+) as cofactor.

Its function is as follows. Negatively regulates transcription of bacterial ribonucleotide reductase nrd genes and operons by binding to NrdR-boxes. In Rhodopseudomonas palustris (strain HaA2), this protein is Transcriptional repressor NrdR.